The following is a 321-amino-acid chain: Lipoyl synthase (321 aa).

Residues Cys-68, Cys-73, Cys-79, Cys-94, Cys-98, Cys-101, and Ser-308 each contribute to the [4Fe-4S] cluster site. The Radical SAM core domain occupies 80 to 297 (FNHGTATFMI…KEEALAMGFT (218 aa)).

Belongs to the radical SAM superfamily. Lipoyl synthase family. The cofactor is [4Fe-4S] cluster.

It localises to the cytoplasm. It carries out the reaction [[Fe-S] cluster scaffold protein carrying a second [4Fe-4S](2+) cluster] + N(6)-octanoyl-L-lysyl-[protein] + 2 oxidized [2Fe-2S]-[ferredoxin] + 2 S-adenosyl-L-methionine + 4 H(+) = [[Fe-S] cluster scaffold protein] + N(6)-[(R)-dihydrolipoyl]-L-lysyl-[protein] + 4 Fe(3+) + 2 hydrogen sulfide + 2 5'-deoxyadenosine + 2 L-methionine + 2 reduced [2Fe-2S]-[ferredoxin]. It participates in protein modification; protein lipoylation via endogenous pathway; protein N(6)-(lipoyl)lysine from octanoyl-[acyl-carrier-protein]: step 2/2. Its function is as follows. Catalyzes the radical-mediated insertion of two sulfur atoms into the C-6 and C-8 positions of the octanoyl moiety bound to the lipoyl domains of lipoate-dependent enzymes, thereby converting the octanoylated domains into lipoylated derivatives. In Photorhabdus laumondii subsp. laumondii (strain DSM 15139 / CIP 105565 / TT01) (Photorhabdus luminescens subsp. laumondii), this protein is Lipoyl synthase.